We begin with the raw amino-acid sequence, 371 residues long: DNA replication and repair protein RecF (371 aa).

Gly-30–Thr-37 is a binding site for ATP.

Belongs to the RecF family.

The protein resides in the cytoplasm. The RecF protein is involved in DNA metabolism; it is required for DNA replication and normal SOS inducibility. RecF binds preferentially to single-stranded, linear DNA. It also seems to bind ATP. In Lysinibacillus sphaericus (strain C3-41), this protein is DNA replication and repair protein RecF.